We begin with the raw amino-acid sequence, 360 residues long: Pyrimidine monooxygenase RutA (360 aa).

FMN contacts are provided by residues 49-50, Asn-115, Glu-124, 140-141, and Ser-190; these read IK and RY.

The protein belongs to the NtaA/SnaA/DszA monooxygenase family. RutA subfamily.

The catalysed reaction is uracil + FMNH2 + NADH + O2 = (Z)-3-ureidoacrylate + FMN + NAD(+) + H2O + H(+). It carries out the reaction thymine + FMNH2 + NADH + O2 = (Z)-2-methylureidoacrylate + FMN + NAD(+) + H2O + H(+). In terms of biological role, catalyzes the pyrimidine ring opening between N-3 and C-4 by an unusual flavin hydroperoxide-catalyzed mechanism, adding oxygen atoms in the process to yield ureidoacrylate peracid, that immediately reacts with FMN forming ureidoacrylate and FMN-N(5)-oxide. The FMN-N(5)-oxide reacts spontaneously with NADH to produce FMN. Requires the flavin reductase RutF to regenerate FMN in vivo. The polypeptide is Pyrimidine monooxygenase RutA (Pseudomonas savastanoi pv. phaseolicola (strain 1448A / Race 6) (Pseudomonas syringae pv. phaseolicola (strain 1448A / Race 6))).